Consider the following 232-residue polypeptide: Megakaryocyte and platelet inhibitory receptor G6b (232 aa).

An N-terminal signal peptide occupies residues 1 to 17 (MALVLQLLPLLLSKVQG). The Extracellular segment spans residues 18 to 140 (NPEVSLEGNP…GSTHGSEYSK (123 aa)). Residues N32 and N112 are each glycosylated (N-linked (GlcNAc...) asparagine). A helical membrane pass occupies residues 141-161 (VLIPLLGFGLVLGLGALGLVW). At 162 to 232 (WRRSCVPPSH…DASTVYAVVV (71 aa)) the chain is on the cytoplasmic side. 2 short sequence motifs (ITIM motif) span residues 200-205 (LHYADL) and 226-231 (TVYAVV). Phosphotyrosine is present on Y202.

Interacts (via ITIM motif) with PTPN6 and PTPN11. Binds to heparin. In terms of processing, N-glycosylated. May be O-glycosylated. Post-translationally, phosphorylated.

The protein localises to the cell membrane. Functionally, inhibitory receptor that acts as a critical regulator of hematopoietic lineage differentiation, megakaryocyte function and platelet production. Inhibits platelet aggregation and activation by agonists such as ADP and collagen-related peptide. This regulation of megakaryocate function as well as platelet production ann activation is done through the inhibition (via the 2 ITIM motifs) of the receptors CLEC1B and GP6:FcRgamma signaling. Appears to operate in a calcium-independent manner. The polypeptide is Megakaryocyte and platelet inhibitory receptor G6b (Rattus norvegicus (Rat)).